We begin with the raw amino-acid sequence, 1221 residues long: 2-oxoglutarate dehydrogenase E1/E2 component (1221 aa).

A 2-oxoglutarate dehydrogenase E1, N-terminal part region spans residues 2–40; the sequence is SSASTFGQNAWLVDEMFQQFQKDPKSVDKEWRELFEAQG. The interval 22–107 is disordered; the sequence is QKDPKSVDKE…KLPEPGQTPI (86 aa). Residues 23–36 show a composition bias toward basic and acidic residues; that stretch reads KDPKSVDKEWRELF. Over residues 41 to 52 the composition is skewed to polar residues; sequence GPNTTPATTEAQ. The interval 41–89 is linker; the sequence is GPNTTPATTEAQPSAPKESAKPAPKAAPAAKAAPRVETKPADKTAPKAK. A compositionally biased stretch (low complexity) spans 53–73; it reads PSAPKESAKPAPKAAPAAKAA. Positions 74-90 are enriched in basic and acidic residues; sequence PRVETKPADKTAPKAKE. The succinyltransferase E2 stretch occupies residues 90–337; it reads ESSVPQQPKL…LRTMSRLLTD (248 aa). Catalysis depends on H316, which acts as the Proton acceptor; for succinyltransferase activity. The tract at residues 338–1221 is 2-oxoglutarate dehydrogenase E1, C-terminal part; that stretch reads DSFWDEIFDA…KQLIDEAFEA (884 aa). Residue R544 participates in thiamine diphosphate binding. Residues H583 and S608 each coordinate 2-oxoglutarate. S608, L610, D645, A646, A647, and N678 together coordinate thiamine diphosphate. Mg(2+) is bound at residue D645. The Mg(2+) site is built by N678 and I680. H1017 is a 2-oxoglutarate binding site. T1035, R1051, K1087, S1090, and R1144 together coordinate acetyl-CoA.

It in the N-terminal section; belongs to the alpha-ketoglutarate dehydrogenase family. The protein in the C-terminal section; belongs to the 2-oxoacid dehydrogenase family. As to quaternary structure, homodimer. Part of an unusual ODH/PDH supercomplex, consisting of AceE (E1), AceF (E2), and Lpd (E3) together with OdhA (E1+E2). Interacts with the FHA domain of unphosphorylated OdhI via its C-terminal dehydrogenase domain. Requires Mg(2+) as cofactor. It depends on thiamine diphosphate as a cofactor.

The catalysed reaction is N(6)-[(R)-lipoyl]-L-lysyl-[protein] + 2-oxoglutarate + H(+) = N(6)-[(R)-S(8)-succinyldihydrolipoyl]-L-lysyl-[protein] + CO2. The enzyme catalyses N(6)-[(R)-dihydrolipoyl]-L-lysyl-[protein] + succinyl-CoA = N(6)-[(R)-S(8)-succinyldihydrolipoyl]-L-lysyl-[protein] + CoA. Its pathway is carbohydrate metabolism; tricarboxylic acid cycle; succinyl-CoA from 2-oxoglutarate (dehydrogenase route): step 1/1. With respect to regulation, inhibited by unphosphorylated OdhI, but not by phosphorylated OdhI. In terms of biological role, catalyzes the E1 and E2 reactions as part of 2-oxoglutarate dehydrogenase (ODH) activity, to convert 2-oxoglutarate to succinyl-CoA and CO(2). OdhA has reductase activity with 2-oxoglutarate but does not react with pyruvate, and also displays transsuccinylase but no transacetylase activity. Since OdhA is not lipoylated, the succinyltransferase activity of its E2 domain is dependent on lipoyl residues of the acetyltransferase AceF. This is 2-oxoglutarate dehydrogenase E1/E2 component from Corynebacterium glutamicum (strain ATCC 13032 / DSM 20300 / JCM 1318 / BCRC 11384 / CCUG 27702 / LMG 3730 / NBRC 12168 / NCIMB 10025 / NRRL B-2784 / 534).